We begin with the raw amino-acid sequence, 218 residues long: Ribosomal RNA small subunit methyltransferase G (218 aa).

Residues Gly86, Leu91, Ala137–Glu138, and Arg153 each bind S-adenosyl-L-methionine.

This sequence belongs to the methyltransferase superfamily. RNA methyltransferase RsmG family.

It localises to the cytoplasm. It carries out the reaction guanosine(527) in 16S rRNA + S-adenosyl-L-methionine = N(7)-methylguanosine(527) in 16S rRNA + S-adenosyl-L-homocysteine. In terms of biological role, specifically methylates the N7 position of guanine in position 527 of 16S rRNA. The chain is Ribosomal RNA small subunit methyltransferase G from Nitratidesulfovibrio vulgaris (strain ATCC 29579 / DSM 644 / CCUG 34227 / NCIMB 8303 / VKM B-1760 / Hildenborough) (Desulfovibrio vulgaris).